Here is an 88-residue protein sequence, read N- to C-terminus: Exodeoxyribonuclease 7 small subunit (88 aa).

The disordered stretch occupies residues 69–88 (DPMHPDDGEPFDPSLVSTSQ).

This sequence belongs to the XseB family. In terms of assembly, heterooligomer composed of large and small subunits.

Its subcellular location is the cytoplasm. It carries out the reaction Exonucleolytic cleavage in either 5'- to 3'- or 3'- to 5'-direction to yield nucleoside 5'-phosphates.. Bidirectionally degrades single-stranded DNA into large acid-insoluble oligonucleotides, which are then degraded further into small acid-soluble oligonucleotides. The sequence is that of Exodeoxyribonuclease 7 small subunit from Xylella fastidiosa (strain M23).